The sequence spans 138 residues: Transmembrane protein 170A (138 aa).

Residues 1–44 are Lumenal-facing; that stretch reads MEGSEAGGGGLLQQILSLRLVPRVGNGTTYSSPLSTFPEMWYGV. N26 is a glycosylation site (N-linked (GlcNAc...) asparagine). Residues 45 to 65 form a helical membrane-spanning segment; sequence FLWALVSSLSFHVPAALLALF. The Cytoplasmic segment spans residues 66–79; sequence TLRHHKYGRFMSVS. Residues 80–100 form a helical membrane-spanning segment; that stretch reads LLLMGIVGPITAGILTSAAIA. Residues 101–110 are Lumenal-facing; sequence GVYRAAGKKM. The chain crosses the membrane as a helical span at residues 111 to 131; sequence IPFEALIFEVGQTFCVVVVSF. Residues 132-138 are Cytoplasmic-facing; it reads LRILATL.

It belongs to the TMEM170 family.

Its subcellular location is the endoplasmic reticulum membrane. The protein localises to the nucleus envelope. Functionally, may regulate membrane morphogenesis in the endoplasmic reticulum (ER) by promoting ER sheet formation at the expense of ER tubules. This chain is Transmembrane protein 170A (TMEM170A), found in Gallus gallus (Chicken).